A 312-amino-acid chain; its full sequence is Isethionate sulfite-lyase activating enzyme (312 aa).

The 285-residue stretch at 20 to 304 (HDGPGIRTIV…GLQKTALDIL (285 aa)) folds into the Radical SAM core domain. 11 residues coordinate [4Fe-4S] cluster: C34, C38, C41, C60, C66, C69, C73, C93, C96, C100, and C104. 40-42 (WCS) is an S-adenosyl-L-methionine binding site. 4Fe-4S ferredoxin-type domains lie at 51 to 83 (AELACNPGRCIDISKCGHCLTACPHGAITCGDD) and 84 to 115 (DKPRIDRSHCADCSIPCAEVCPAQGLLVYGKK). Residues G144, 193–195 (DIK), and H267 contribute to the S-adenosyl-L-methionine site.

The protein belongs to the organic radical-activating enzymes family. Monomer. [4Fe-4S] cluster is required as a cofactor.

It carries out the reaction glycyl-[protein] + reduced [flavodoxin] + S-adenosyl-L-methionine = glycin-2-yl radical-[protein] + semiquinone [flavodoxin] + 5'-deoxyadenosine + L-methionine + H(+). It participates in organosulfur degradation; alkanesulfonate degradation. In terms of biological role, involved in an anaerobic respiration pathway that converts the sulfonate isethionate (2-hydroxyethanesulfonate) to ammonia, acetate and sulfide. Catalyzes activation of the isethionate sulfite-lyase IslA under anaerobic conditions by generation of an organic free radical on a glycine residue, via a homolytic cleavage of S-adenosyl-L-methionine (SAM). The sequence is that of Isethionate sulfite-lyase activating enzyme from Desulfovibrio desulfuricans (strain ATCC 27774 / DSM 6949 / MB).